A 186-amino-acid chain; its full sequence is Ribosome-recycling factor (186 aa).

The protein belongs to the RRF family.

The protein localises to the cytoplasm. Functionally, responsible for the release of ribosomes from messenger RNA at the termination of protein biosynthesis. May increase the efficiency of translation by recycling ribosomes from one round of translation to another. This Bacteroides thetaiotaomicron (strain ATCC 29148 / DSM 2079 / JCM 5827 / CCUG 10774 / NCTC 10582 / VPI-5482 / E50) protein is Ribosome-recycling factor.